Reading from the N-terminus, the 421-residue chain is Histidine--tRNA ligase (421 aa).

Belongs to the class-II aminoacyl-tRNA synthetase family. As to quaternary structure, homodimer.

The protein localises to the cytoplasm. The enzyme catalyses tRNA(His) + L-histidine + ATP = L-histidyl-tRNA(His) + AMP + diphosphate + H(+). This is Histidine--tRNA ligase from Caldicellulosiruptor bescii (strain ATCC BAA-1888 / DSM 6725 / KCTC 15123 / Z-1320) (Anaerocellum thermophilum).